Here is a 622-residue protein sequence, read N- to C-terminus: MNTVLNNGRNTTCHAHNVVAHDPFSFEHKSLNTIEKEWKEWKRTDHSLYVAPIVGTVGSFLLKKVGSLVGKRILSELQNLIFPSGSIDLMQEILRATEQFINQRLNADTLGRVNAELAGLQANVAEFNRQVDNFLNPNQNPVPLAIIDSVNTLQQLFLSRLPQFQIQGYQLLLLPLFAQAANFNLSFIRGVILNADEWGISAATVRTYRDHLRKFHRDYSNYCINPYQTAFRGLNHRLPDMLEFRTYMFLNVFEYVSIWSLFKYQSLLVSSGANLYASGSGPTQSFTAQNWPFLYSLFQVNSNYVLNGLSGARTTITFPNIGGLPVYHNSTLHFARINYRGGVSSSRIGQANLNQNFNISTLFNPLQTPFIRSWLDSGTDREGVATSTNWQSGAFETTLLRFSIFSARGNSNFFPDYFIRNISGVVGTISNADLARPLHFNEIRDIGTTAVASLVTVHNRKNNIYDTHENGTMIHLAPNDYTGFTVSPIHATQVNNQIRTFISEKYGNQGDSLRFELSNPTARYTLRGNGNSYNLYLRVSSIGSSTIRVTINGRVYTANVNTTTNNDGVLDNGARFSDINIGNVVASANTNVPLDIQVTFNGNPQFELMNIMFVPTNLPPLY.

This sequence belongs to the delta endotoxin family.

Functionally, promotes colloidosmotic lysis by binding to the midgut epithelial cells of lepidopteran larvae. Has low activity on dipteran larvae. The polypeptide is Pesticidal crystal protein Cry2Ac (cry2Ac) (Bacillus thuringiensis).